Here is a 280-residue protein sequence, read N- to C-terminus: Pantothenate synthetase (280 aa).

32–39 provides a ligand contact to ATP; the sequence is MGALHAGH. The Proton donor role is filled by H39. Residue Q63 coordinates (R)-pantoate. Q63 is a beta-alanine binding site. ATP is bound at residue 149–152; that stretch reads GEKD. Q155 contacts (R)-pantoate. Residues V178 and 186–189 contribute to the ATP site; that span reads MSSR.

This sequence belongs to the pantothenate synthetase family. Homodimer.

It is found in the cytoplasm. The catalysed reaction is (R)-pantoate + beta-alanine + ATP = (R)-pantothenate + AMP + diphosphate + H(+). It participates in cofactor biosynthesis; (R)-pantothenate biosynthesis; (R)-pantothenate from (R)-pantoate and beta-alanine: step 1/1. In terms of biological role, catalyzes the condensation of pantoate with beta-alanine in an ATP-dependent reaction via a pantoyl-adenylate intermediate. The sequence is that of Pantothenate synthetase from Ruegeria sp. (strain TM1040) (Silicibacter sp.).